The primary structure comprises 420 residues: Putative epoxide hydrolase (420 aa).

The protein belongs to the peptidase S33 family.

The protein operates within mycotoxin biosynthesis. In terms of biological role, putative epoxide hydrolase; part of the fragmented gene cluster that mediates the biosynthesis of dothistromin (DOTH), a polyketide toxin very similar in structure to the aflatoxin precursor, versicolorin B. The first step of the pathway is the conversion of acetate to norsolorinic acid (NOR) and requires the fatty acid synthase subunits hexA and hexB, as well as the polyketide synthase pksA. PksA combines a hexanoyl starter unit and 7 malonyl-CoA extender units to synthesize the precursor NOR. The hexanoyl starter unit is provided to the acyl-carrier protein (ACP) domain by the fungal fatty acid synthase hexA/hexB. The second step is the conversion of NOR to averantin (AVN) and requires the norsolorinic acid ketoreductase nor1, which catalyzes the dehydration of norsolorinic acid to form (1'S)-averantin. The cytochrome P450 monooxygenase avnA then catalyzes the hydroxylation of AVN to 5'hydroxyaverantin (HAVN). The next step is performed by adhA that transforms HAVN to averufin (AVF). Averufin might then be converted to hydroxyversicolorone by cypX and avfA. Hydroxyversicolorone is further converted versiconal hemiacetal acetate (VHA) by moxY. VHA is then the substrate for the versiconal hemiacetal acetate esterase est1 to yield versiconal (VAL). Versicolorin B synthase vbsA then converts VAL to versicolorin B (VERB) by closing the bisfuran ring. Then, the activity of the versicolorin B desaturase verB leads to versicolorin A (VERA). DotB, a predicted chloroperoxidase, may perform epoxidation of the A-ring of VERA. Alternatively, a cytochrome P450, such as cypX or avnA could catalyze this step. It is also possible that another, uncharacterized, cytochrome P450 enzyme is responsible for this step. Opening of the epoxide could potentially be achieved by the epoxide hydrolase epoA. However, epoA seems not to be required for DOTH biosynthesis, but other epoxide hydrolases may have the ability to complement this hydrolysis. Alternatively, opening of the epoxide ring could be achieved non-enzymatically. The next step is the deoxygenation of ring A to yield the 5,8-dihydroxyanthraquinone which is most likely catalyzed by the NADPH dehydrogenase encoded by ver1. The last stages of DOTH biosynthesis are proposed to involve hydroxylation of the bisfuran. OrdB and norB might have oxidative roles here. An alternative possibility is that cytochrome P450 monoogenases such as avnA and cypX might perform these steps in addition to previously proposed steps. This chain is Putative epoxide hydrolase, found in Dothistroma septosporum (Red band needle blight fungus).